We begin with the raw amino-acid sequence, 294 residues long: MKKSESLPVLIVTGLSGAGKSTVLNVFEDLRFFTIDGLPVGVVADLLEHLARDAMGRYRGVVLGMDLRQFDFLDEFEGALMRLEKMGVSPRIIYLEADSDTLVRRFATTRRPHPLEGGDLGLEAAVEHERNLLAPVRERADLILDTSEFSIHDLRRIVQKKWSSLGGSLRSLRVNLITFGFKYGVPSDADMVFDLRFLPNPYFDAKLKALSGKDPEIQQFVLGCEQGKTFFKRFLDFLLFLLPQYEAEGRYRITLAIGCTGGRHRSVSTAEALRDALKKSDYAVSLEHRHIDLG.

14–21 serves as a coordination point for ATP; the sequence is GLSGAGKS. 66–69 is a GTP binding site; that stretch reads DLRQ.

It belongs to the RapZ-like family.

Functionally, displays ATPase and GTPase activities. The polypeptide is Nucleotide-binding protein Dde_1774 (Oleidesulfovibrio alaskensis (strain ATCC BAA-1058 / DSM 17464 / G20) (Desulfovibrio alaskensis)).